Consider the following 315-residue polypeptide: Replication factor C small subunit (315 aa).

ATP is bound at residue Gly-43–Thr-50.

This sequence belongs to the activator 1 small subunits family. RfcS subfamily. As to quaternary structure, heteromultimer composed of small subunits (RfcS) and large subunits (RfcL).

Functionally, part of the RFC clamp loader complex which loads the PCNA sliding clamp onto DNA. In Methanococcus maripaludis (strain C5 / ATCC BAA-1333), this protein is Replication factor C small subunit.